The primary structure comprises 579 residues: Protein O-linked-mannose beta-1,4-N-acetylglucosaminyltransferase 2 (579 aa).

At 1–4 (MGVG) the chain is on the cytoplasmic side. Residues 5–25 (TLLNGLLVSVVAALLWKYSKL) form a helical; Signal-anchor for type II membrane protein membrane-spanning segment. Over 26–579 (SEHAALLEEE…PFADVLMCRT (554 aa)) the chain is Lumenal. N98, N275, and N542 each carry an N-linked (GlcNAc...) asparagine glycan. The Fibronectin type-III domain maps to 480-579 (HPGRVRDARC…PFADVLMCRT (100 aa)).

This sequence belongs to the glycosyltransferase 61 family.

It localises to the endoplasmic reticulum membrane. The catalysed reaction is 3-O-(alpha-D-mannosyl)-L-threonyl-[protein] + UDP-N-acetyl-alpha-D-glucosamine = 3-O-(N-acetyl-beta-D-glucosaminyl-(1-&gt;4)-alpha-D-mannosyl)-L-threonyl-[protein] + UDP + H(+). The protein operates within protein modification; protein glycosylation. O-linked mannose beta-1,4-N-acetylglucosaminyltransferase that transfers UDP-N-acetyl-D-glucosamine to the 4-position of the mannose to generate N-acetyl-D-glucosamine-beta-1,4-O-D-mannosylprotein. Involved in the biosynthesis of the phosphorylated O-mannosyl trisaccharide (N-acetylgalactosamine-beta-3-N-acetylglucosamine-beta-4-(phosphate-6-)mannose), a carbohydrate structure present in alpha-dystroglycan (DAG1), which is required for binding laminin G-like domain-containing extracellular proteins with high affinity. This is Protein O-linked-mannose beta-1,4-N-acetylglucosaminyltransferase 2 (pomgnt2) from Tetraodon nigroviridis (Spotted green pufferfish).